The sequence spans 125 residues: Phosphoribosyl-AMP cyclohydrolase (125 aa).

A Mg(2+)-binding site is contributed by Asp-74. Cys-75 contacts Zn(2+). Asp-76 and Asp-78 together coordinate Mg(2+). Cys-92 and Cys-99 together coordinate Zn(2+).

Belongs to the PRA-CH family. As to quaternary structure, homodimer. It depends on Mg(2+) as a cofactor. Requires Zn(2+) as cofactor.

Its subcellular location is the cytoplasm. It catalyses the reaction 1-(5-phospho-beta-D-ribosyl)-5'-AMP + H2O = 1-(5-phospho-beta-D-ribosyl)-5-[(5-phospho-beta-D-ribosylamino)methylideneamino]imidazole-4-carboxamide. The protein operates within amino-acid biosynthesis; L-histidine biosynthesis; L-histidine from 5-phospho-alpha-D-ribose 1-diphosphate: step 3/9. Catalyzes the hydrolysis of the adenine ring of phosphoribosyl-AMP. In Geotalea uraniireducens (strain Rf4) (Geobacter uraniireducens), this protein is Phosphoribosyl-AMP cyclohydrolase.